Reading from the N-terminus, the 452-residue chain is Probable alpha-galactosidase B (452 aa).

The first 24 residues, 1–24 (MLHRATTTAAAAAAAALLLCPVQA), serve as a signal peptide directing secretion. A disulfide bond links cysteine 47 and cysteine 79. Residues asparagine 87 and asparagine 138 are each glycosylated (N-linked (GlcNAc...) asparagine). Cysteines 129 and 159 form a disulfide. Aspartate 157 serves as the catalytic Nucleophile. An N-linked (GlcNAc...) asparagine glycan is attached at asparagine 184. 231–235 (DWGQA) serves as a coordination point for substrate. Aspartate 253 functions as the Proton donor in the catalytic mechanism. Asparagine 292, asparagine 391, asparagine 409, and asparagine 410 each carry an N-linked (GlcNAc...) asparagine glycan.

It belongs to the glycosyl hydrolase 27 family.

It is found in the secreted. It carries out the reaction Hydrolysis of terminal, non-reducing alpha-D-galactose residues in alpha-D-galactosides, including galactose oligosaccharides, galactomannans and galactolipids.. Its function is as follows. Hydrolyzes a variety of simple alpha-D-galactoside as well as more complex molecules such as oligosaccharides and polysaccharides. This chain is Probable alpha-galactosidase B, found in Talaromyces emersonii (Thermophilic fungus).